An 86-amino-acid polypeptide reads, in one-letter code: Large ribosomal subunit protein uL23 (86 aa).

The protein belongs to the universal ribosomal protein uL23 family. Part of the 50S ribosomal subunit. Contacts protein L29.

In terms of biological role, binds to 23S rRNA. One of the proteins that surrounds the polypeptide exit tunnel on the outside of the ribosome. The sequence is that of Large ribosomal subunit protein uL23 from Thermococcus gammatolerans (strain DSM 15229 / JCM 11827 / EJ3).